The sequence spans 175 residues: Ribosome maturation factor RimM (175 aa).

In terms of domain architecture, PRC barrel spans 98 to 175 (EGEYYWHQLE…EMRVDWDADF (78 aa)).

Belongs to the RimM family. As to quaternary structure, binds ribosomal protein uS19.

It localises to the cytoplasm. Its function is as follows. An accessory protein needed during the final step in the assembly of 30S ribosomal subunit, possibly for assembly of the head region. Essential for efficient processing of 16S rRNA. May be needed both before and after RbfA during the maturation of 16S rRNA. It has affinity for free ribosomal 30S subunits but not for 70S ribosomes. The polypeptide is Ribosome maturation factor RimM (Pseudomonas aeruginosa (strain ATCC 15692 / DSM 22644 / CIP 104116 / JCM 14847 / LMG 12228 / 1C / PRS 101 / PAO1)).